Reading from the N-terminus, the 196-residue chain is Peptidyl-tRNA hydrolase (196 aa).

Y17 contributes to the tRNA binding site. The active-site Proton acceptor is the H22. Positions 68, 70, and 116 each coordinate tRNA.

It belongs to the PTH family. Monomer.

The protein localises to the cytoplasm. It carries out the reaction an N-acyl-L-alpha-aminoacyl-tRNA + H2O = an N-acyl-L-amino acid + a tRNA + H(+). Hydrolyzes ribosome-free peptidyl-tRNAs (with 1 or more amino acids incorporated), which drop off the ribosome during protein synthesis, or as a result of ribosome stalling. Its function is as follows. Catalyzes the release of premature peptidyl moieties from peptidyl-tRNA molecules trapped in stalled 50S ribosomal subunits, and thus maintains levels of free tRNAs and 50S ribosomes. This Yersinia pestis bv. Antiqua (strain Antiqua) protein is Peptidyl-tRNA hydrolase.